We begin with the raw amino-acid sequence, 1221 residues long: MSSASTFGQNAWLVDEMFQQFQKDPKSVDKEWRELFEAQGGPNTTPATTEAQPSAPKESAKPAPKAAPAAKAAPRVETKPADKTAPKAKESSVPQQPKLPEPGQTPIRGIFKSIAKNMDISLEIPTATSVRDMPARLMFENRAMVNDQLKRTRGGKISFTHIIGYAMVKAVMAHPDMNNSYDVIDGKPTLIVPEHINLGLAIDLPQKDGSRALVVAAIKETEKMNFSEFLAAYEDIVARSRKGKLTMDDYQGVTVSLTNPGGIGTRHSVPRLTKGQGTIIGVGSMDYPAEFQGASEDRLAELGVGKLVTITSTYDHRVIQGAVSGEFLRTMSRLLTDDSFWDEIFDAMNVPYTPMRWAQDVPNTGVDKNTRVMQLIEAYRSRGHLIADTNPLSWVQPGMPVPDHRDLDIETHNLTIWDLDRTFNVGGFGGKETMTLREVLSRLRAAYTLKVGSEYTHILDRDERTWLQDRLEAGMPKPTQAEQKYILQKLNAAEAFENFLQTKYVGQKRFSLEGAEALIPLMDSAIDTAAGQGLDEVVIGMPHRGRLNVLFNIVGKPLASIFNEFEGQMEQGQIGGSGDVKYHLGSEGQHLQMFGDGEIKVSLTANPSHLEAVNPVMEGIVRAKQDYLDKGVDGKTVVPLLLHGDAAFAGLGIVPETINLAKLRGYDVGGTIHIVVNNQIGFTTTPDSSRSMHYATDYAKAFGCPVFHVNGDDPEAVVWVGQLATEYRRRFGKDVFIDLVCYRLRGHNEADDPSMTQPKMYELITGRETVRAQYTEDLLGRGDLSNEDAEAVVRDFHDQMESVFNEVKEGGKKQAEAQTGITGSQKLPHGLETNISREELLELGQAFANTPEGFNYHPRVAPVAKKRVSSVTEGGIDWAWGELLAFGSLANSGRLVRLAGEDSRRGTFTQRHAVAIDPATAEEFNPLHELAQSKGNNGKFLVYNSALTEYAGMGFEYGYSVGNEDSIVAWEAQFGDFANGAQTIIDEYVSSGEAKWGQTSKLILLLPHGYEGQGPDHSSARIERFLQLCAEGSMTVAQPSTPANHFHLLRRHALSDLKRPLVIFTPKSMLRNKAAASAPEDFTEVTKFQSVINDPNVADAAKVKKVMLVSGKLYYELAKRKEKDGRDDIAIVRIEMLHPIPFNRISEALAGYPNAEEVLFVQDEPANQGPWPFYQEHLPELIPNMPKMRRVSRRAQSSTATGVAKVHQLEEKQLIDEAFEA.

A 2-oxoglutarate dehydrogenase E1, N-terminal part region spans residues 2-40 (SSASTFGQNAWLVDEMFQQFQKDPKSVDKEWRELFEAQG). The segment at 22 to 107 (QKDPKSVDKE…KLPEPGQTPI (86 aa)) is disordered. The span at 23–36 (KDPKSVDKEWRELF) shows a compositional bias: basic and acidic residues. Positions 41-52 (GPNTTPATTEAQ) are enriched in polar residues. The segment at 41–89 (GPNTTPATTEAQPSAPKESAKPAPKAAPAAKAAPRVETKPADKTAPKAK) is linker. Residues 53–73 (PSAPKESAKPAPKAAPAAKAA) are compositionally biased toward low complexity. The span at 74–90 (PRVETKPADKTAPKAKE) shows a compositional bias: basic and acidic residues. A succinyltransferase E2 region spans residues 90-337 (ESSVPQQPKL…LRTMSRLLTD (248 aa)). The active-site Proton acceptor; for succinyltransferase activity is the His316. The 2-oxoglutarate dehydrogenase E1, C-terminal part stretch occupies residues 338-1221 (DSFWDEIFDA…KQLIDEAFEA (884 aa)). Residue Arg544 participates in thiamine diphosphate binding. 2-oxoglutarate-binding residues include His583 and Ser608. Residues Ser608, Leu610, Asp645, Ala646, Ala647, and Asn678 each contribute to the thiamine diphosphate site. A Mg(2+)-binding site is contributed by Asp645. Residues Asn678 and Ile680 each contribute to the Mg(2+) site. His1017 is a binding site for 2-oxoglutarate. Acetyl-CoA-binding residues include Thr1035, Arg1051, Lys1087, Ser1090, and Arg1144.

This sequence in the N-terminal section; belongs to the alpha-ketoglutarate dehydrogenase family. It in the C-terminal section; belongs to the 2-oxoacid dehydrogenase family. In terms of assembly, homodimer. Part of an unusual ODH/PDH supercomplex, consisting of AceE (E1), AceF (E2), and Lpd (E3) together with OdhA (E1+E2). Interacts with the FHA domain of unphosphorylated OdhI via its C-terminal dehydrogenase domain. Mg(2+) serves as cofactor. The cofactor is thiamine diphosphate.

The enzyme catalyses N(6)-[(R)-lipoyl]-L-lysyl-[protein] + 2-oxoglutarate + H(+) = N(6)-[(R)-S(8)-succinyldihydrolipoyl]-L-lysyl-[protein] + CO2. The catalysed reaction is N(6)-[(R)-dihydrolipoyl]-L-lysyl-[protein] + succinyl-CoA = N(6)-[(R)-S(8)-succinyldihydrolipoyl]-L-lysyl-[protein] + CoA. It functions in the pathway carbohydrate metabolism; tricarboxylic acid cycle; succinyl-CoA from 2-oxoglutarate (dehydrogenase route): step 1/1. Its activity is regulated as follows. Inhibited by unphosphorylated OdhI, but not by phosphorylated OdhI. Functionally, catalyzes the E1 and E2 reactions as part of 2-oxoglutarate dehydrogenase (ODH) activity, to convert 2-oxoglutarate to succinyl-CoA and CO(2). OdhA has reductase activity with 2-oxoglutarate but does not react with pyruvate, and also displays transsuccinylase but no transacetylase activity. Since OdhA is not lipoylated, the succinyltransferase activity of its E2 domain is dependent on lipoyl residues of the acetyltransferase AceF. The chain is 2-oxoglutarate dehydrogenase E1/E2 component from Corynebacterium glutamicum (strain ATCC 13032 / DSM 20300 / JCM 1318 / BCRC 11384 / CCUG 27702 / LMG 3730 / NBRC 12168 / NCIMB 10025 / NRRL B-2784 / 534).